The sequence spans 334 residues: Holliday junction branch migration complex subunit RuvB (334 aa).

A large ATPase domain (RuvB-L) region spans residues 4-184 (ADRLIQPQLQ…FGIPLRLEFY (181 aa)). Residues Arg24, Gly65, Lys68, Thr69, Thr70, 131–133 (EDY), Arg174, Tyr184, and Arg221 each bind ATP. Thr69 lines the Mg(2+) pocket. The small ATPAse domain (RuvB-S) stretch occupies residues 185–255 (NVKDLSTIVT…VAELALNLLD (71 aa)). The segment at 258–334 (GEGFDYMDRK…YVHFGMIKPE (77 aa)) is head domain (RuvB-H). Arg294, Arg313, and Arg318 together coordinate DNA.

It belongs to the RuvB family. As to quaternary structure, homohexamer. Forms an RuvA(8)-RuvB(12)-Holliday junction (HJ) complex. HJ DNA is sandwiched between 2 RuvA tetramers; dsDNA enters through RuvA and exits via RuvB. An RuvB hexamer assembles on each DNA strand where it exits the tetramer. Each RuvB hexamer is contacted by two RuvA subunits (via domain III) on 2 adjacent RuvB subunits; this complex drives branch migration. In the full resolvosome a probable DNA-RuvA(4)-RuvB(12)-RuvC(2) complex forms which resolves the HJ.

The protein resides in the cytoplasm. The catalysed reaction is ATP + H2O = ADP + phosphate + H(+). The RuvA-RuvB-RuvC complex processes Holliday junction (HJ) DNA during genetic recombination and DNA repair, while the RuvA-RuvB complex plays an important role in the rescue of blocked DNA replication forks via replication fork reversal (RFR). RuvA specifically binds to HJ cruciform DNA, conferring on it an open structure. The RuvB hexamer acts as an ATP-dependent pump, pulling dsDNA into and through the RuvAB complex. RuvB forms 2 homohexamers on either side of HJ DNA bound by 1 or 2 RuvA tetramers; 4 subunits per hexamer contact DNA at a time. Coordinated motions by a converter formed by DNA-disengaged RuvB subunits stimulates ATP hydrolysis and nucleotide exchange. Immobilization of the converter enables RuvB to convert the ATP-contained energy into a lever motion, pulling 2 nucleotides of DNA out of the RuvA tetramer per ATP hydrolyzed, thus driving DNA branch migration. The RuvB motors rotate together with the DNA substrate, which together with the progressing nucleotide cycle form the mechanistic basis for DNA recombination by continuous HJ branch migration. Branch migration allows RuvC to scan DNA until it finds its consensus sequence, where it cleaves and resolves cruciform DNA. This is Holliday junction branch migration complex subunit RuvB from Shewanella oneidensis (strain ATCC 700550 / JCM 31522 / CIP 106686 / LMG 19005 / NCIMB 14063 / MR-1).